Consider the following 637-residue polypeptide: Chaperone protein DnaK (637 aa).

The residue at position 196 (T196) is a Phosphothreonine; by autocatalysis. Disordered stretches follow at residues 503–525 (AEIN…RKEE) and 598–637 (SGAG…DDKK). Residues 598–619 (SGAGAAQAQPEAPQNSGSSQSS) show a composition bias toward low complexity.

It belongs to the heat shock protein 70 family.

In terms of biological role, acts as a chaperone. This is Chaperone protein DnaK from Chlorobium chlorochromatii (strain CaD3).